A 271-amino-acid chain; its full sequence is Purine nucleoside phosphorylase 1 (271 aa).

Residues S28, H59, 79 to 81 (RFH), and A111 each bind phosphate. S28 is subject to Phosphoserine. An a purine D-ribonucleoside-binding site is contributed by E191. S210 contacts phosphate. N233 provides a ligand contact to a purine D-ribonucleoside.

This sequence belongs to the PNP/MTAP phosphorylase family. In terms of assembly, homotrimer.

It carries out the reaction a purine 2'-deoxy-D-ribonucleoside + phosphate = a purine nucleobase + 2-deoxy-alpha-D-ribose 1-phosphate. The protein operates within purine metabolism; purine nucleoside salvage. The purine nucleoside phosphorylases catalyze the phosphorolytic breakdown of the N-glycosidic bond in the beta-(deoxy)ribonucleoside molecules, with the formation of the corresponding free purine bases and pentose-1-phosphate. Cleaves guanosine, inosine, 2'-deoxyguanosine and 2'-deoxyinosine. This is Purine nucleoside phosphorylase 1 (punA) from Bacillus subtilis (strain 168).